The chain runs to 124 residues: MLVIFLGILGLLANQVLGLPTQAEGHLRSTDNPPQEELGYWCTYMESCKFCWECEHGICKNKVNRSMPWIIENSYLTSCEVSRWYNQCTYDEGNGHYHVMDCSNPVPHNRPHRLGRKIYEKEDL.

The first 18 residues, 1–18 (MLVIFLGILGLLANQVLG), serve as a signal peptide directing secretion. A glycan (N-linked (GlcNAc...) asparagine; by host) is linked at N64. The Prevents secretion from ER motif lies at 121-124 (KEDL).

Belongs to the asfivirus MGF 110 family.

Its subcellular location is the virion. The protein localises to the host endoplasmic reticulum-Golgi intermediate compartment. In terms of biological role, causes the redistribution of lumenal ER protein to an enlarged ERGIC compartment. This chain is Protein MGF 110-4L, found in Ornithodoros (relapsing fever ticks).